Consider the following 355-residue polypeptide: Protein RecA (355 aa).

65-72 (GPESSGKT) is an ATP binding site.

Belongs to the RecA family.

It is found in the cytoplasm. Functionally, can catalyze the hydrolysis of ATP in the presence of single-stranded DNA, the ATP-dependent uptake of single-stranded DNA by duplex DNA, and the ATP-dependent hybridization of homologous single-stranded DNAs. It interacts with LexA causing its activation and leading to its autocatalytic cleavage. The sequence is that of Protein RecA from Pseudomonas entomophila (strain L48).